The primary structure comprises 191 residues: Transcriptional regulator MET32 (191 aa).

A disordered region spans residues 70–96 (KKENALPKPPKSSKSKPQDRRNSTGEK). Basic and acidic residues predominate over residues 85–96 (KPQDRRNSTGEK). Residues 98–120 (FKCAKCSLEFSRSSDLRRHEKTH) form a C2H2-type 1 zinc finger. The C2H2-type 2; atypical zinc-finger motif lies at 126–150 (NICPQCGKGFARKDALKRHYDTLTC).

As to quaternary structure, interacts with MET4 and MET28.

Its subcellular location is the cytoplasm. It is found in the nucleus. Its function is as follows. Auxiliary transcriptional regulator of sulfur amino acid metabolism. Involved in the transcriptional activation of MET28. The protein is Transcriptional regulator MET32 (MET32) of Saccharomyces cerevisiae (strain ATCC 204508 / S288c) (Baker's yeast).